The chain runs to 87 residues: Beta-toxin Cn4 (87 aa).

A signal peptide spans 1–19 (MNSLLMITACLALVGTVWA). In terms of domain architecture, LCN-type CS-alpha/beta spans 20 to 85 (KEGYLVNSYT…VWPLKNKTCN (66 aa)). Cystine bridges form between C31-C84, C35-C60, C44-C65, and C48-C67. N85 is subject to Asparagine amide.

Belongs to the long (4 C-C) scorpion toxin superfamily. Sodium channel inhibitor family. Beta subfamily. In terms of tissue distribution, expressed by the venom gland.

The protein localises to the secreted. In terms of biological role, beta toxins bind voltage-independently at site-4 of sodium channels (Nav) and shift the voltage of activation toward more negative potentials thereby affecting sodium channel activation and promoting spontaneous and repetitive firing. This toxin affects the activation mechanism of sodium channels of squid axon. It also competes with Cn2 in rat brain synaptosomes. Is lethal to mice. This chain is Beta-toxin Cn4, found in Centruroides noxius (Mexican scorpion).